Reading from the N-terminus, the 129-residue chain is uncharacterized protein (129 aa).

3 consecutive transmembrane segments (helical) span residues Ile15–Phe35, Ile48–Phe68, and Ile107–Cys127.

The protein resides in the membrane. This is an uncharacterized protein from Saccharomyces cerevisiae (strain ATCC 204508 / S288c) (Baker's yeast).